Reading from the N-terminus, the 481-residue chain is Phosphoglucosamine mutase (481 aa).

Residue S128 is the Phosphoserine intermediate of the active site. Mg(2+) is bound by residues S128, D269, D271, and D273. S128 bears the Phosphoserine mark.

It belongs to the phosphohexose mutase family. Requires Mg(2+) as cofactor. In terms of processing, activated by phosphorylation.

It carries out the reaction alpha-D-glucosamine 1-phosphate = D-glucosamine 6-phosphate. In terms of biological role, catalyzes the conversion of glucosamine-6-phosphate to glucosamine-1-phosphate. The polypeptide is Phosphoglucosamine mutase (Synechocystis sp. (strain ATCC 27184 / PCC 6803 / Kazusa)).